Here is a 234-residue protein sequence, read N- to C-terminus: Sugar fermentation stimulation protein homolog (234 aa).

The protein belongs to the SfsA family.

The polypeptide is Sugar fermentation stimulation protein homolog (Photobacterium profundum (strain SS9)).